Consider the following 132-residue polypeptide: ATP synthase epsilon chain (132 aa).

This sequence belongs to the ATPase epsilon chain family. In terms of assembly, F-type ATPases have 2 components, CF(1) - the catalytic core - and CF(0) - the membrane proton channel. CF(1) has five subunits: alpha(3), beta(3), gamma(1), delta(1), epsilon(1). CF(0) has three main subunits: a, b and c.

It is found in the cell membrane. In terms of biological role, produces ATP from ADP in the presence of a proton gradient across the membrane. The chain is ATP synthase epsilon chain from Desulfitobacterium hafniense (strain DSM 10664 / DCB-2).